We begin with the raw amino-acid sequence, 270 residues long: tRNA pseudouridine synthase A (270 aa).

Asp-51 functions as the Nucleophile in the catalytic mechanism. A substrate-binding site is contributed by Tyr-109.

This sequence belongs to the tRNA pseudouridine synthase TruA family. Homodimer.

The catalysed reaction is uridine(38/39/40) in tRNA = pseudouridine(38/39/40) in tRNA. In terms of biological role, formation of pseudouridine at positions 38, 39 and 40 in the anticodon stem and loop of transfer RNAs. This Burkholderia vietnamiensis (strain G4 / LMG 22486) (Burkholderia cepacia (strain R1808)) protein is tRNA pseudouridine synthase A.